The following is a 243-amino-acid chain: tRNA (guanine-N(1)-)-methyltransferase (243 aa).

Residues Gly-112 and Leu-131–Leu-136 each bind S-adenosyl-L-methionine.

It belongs to the RNA methyltransferase TrmD family. Homodimer.

It is found in the cytoplasm. The enzyme catalyses guanosine(37) in tRNA + S-adenosyl-L-methionine = N(1)-methylguanosine(37) in tRNA + S-adenosyl-L-homocysteine + H(+). Functionally, specifically methylates guanosine-37 in various tRNAs. This is tRNA (guanine-N(1)-)-methyltransferase from Leuconostoc mesenteroides subsp. mesenteroides (strain ATCC 8293 / DSM 20343 / BCRC 11652 / CCM 1803 / JCM 6124 / NCDO 523 / NBRC 100496 / NCIMB 8023 / NCTC 12954 / NRRL B-1118 / 37Y).